The chain runs to 104 residues: uncharacterized protein (104 aa).

An N-terminal signal peptide occupies residues 1 to 25 (MVSSFFMASTLLAISSCFNSSISRA). The chain crosses the membrane as a helical span at residues 79–99 (IPVVIVVEISSTLVLLLSAFL).

The protein resides in the membrane. This is an uncharacterized protein from Saccharomyces cerevisiae (strain ATCC 204508 / S288c) (Baker's yeast).